The primary structure comprises 383 residues: 6-hydroxynicotinate 3-monooxygenase (383 aa).

Residues 1-26 (MQGKPRIAVIGAGLGGTAGAALMARA) form the signal peptide. Residues G15, 34-35 (EQ), H47, R108, and L130 contribute to the FAD site. H47 (proton acceptor) is an active-site residue. Y214 acts as the Proton acceptor in catalysis. Residues D293 and 306 to 307 (AA) each bind FAD.

The protein belongs to the 6-hydroxynicotinate 3-monooxygenase family. Monomer. Requires FAD as cofactor.

It carries out the reaction 6-hydroxynicotinate + NADH + O2 + 2 H(+) = 2,5-dihydroxypyridine + CO2 + NAD(+) + H2O. Its pathway is cofactor degradation; nicotinate degradation. Its activity is regulated as follows. Competitively inhibited by 6-hydroxynicotinaldehyde. Flavin-dependent monooxygenase (FMO) that catalyzes the decarboxylative hydroxylation of 6-hydroxynicotinic acid (6-HNA) to 2,5-dihydroxypyridine (2,5-DHP) with concomitant oxidation of NADH, a step in the aerobic nicotinate degradation pathway. Is also active on the non-natural substrate 5-chloro-6-hydroxynicotinate, and is much less efficient on the substrate analog 4-hydroxybenzoate. This Bordetella bronchiseptica (strain ATCC BAA-588 / NCTC 13252 / RB50) (Alcaligenes bronchisepticus) protein is 6-hydroxynicotinate 3-monooxygenase.